We begin with the raw amino-acid sequence, 261 residues long: Small ribosomal subunit protein mS23 (261 aa).

The tract at residues 233-261 is disordered; sequence RASSPSASWTNETEEEQKPIDQDVEEIQL.

Belongs to the mitochondrion-specific ribosomal protein mS23 family. Component of the mitochondrial small ribosomal subunit.

The protein localises to the mitochondrion. The polypeptide is Small ribosomal subunit protein mS23 (RSM25) (Kluyveromyces lactis (strain ATCC 8585 / CBS 2359 / DSM 70799 / NBRC 1267 / NRRL Y-1140 / WM37) (Yeast)).